We begin with the raw amino-acid sequence, 239 residues long: Alpha-acetolactate decarboxylase (239 aa).

Belongs to the alpha-acetolactate decarboxylase family.

The enzyme catalyses (2S)-2-acetolactate + H(+) = (R)-acetoin + CO2. The protein operates within polyol metabolism; (R,R)-butane-2,3-diol biosynthesis; (R,R)-butane-2,3-diol from pyruvate: step 2/3. With respect to regulation, the enzyme is active only in the presence of branched-chain amino acids. Valine results in much higher activation than leucine or isoleucine. Its function is as follows. Converts acetolactate into acetoin. Regulates leucine and valine biosynthesis by diverting the flux of alpha-acetolactate towards acetoin when the branched-chain amino acids are present in high concentration. The polypeptide is Alpha-acetolactate decarboxylase (aldC) (Streptococcus thermophilus).